A 46-amino-acid chain; its full sequence is L-amino-acid oxidase (46 aa).

N-linked (GlcNAc...) asparagine glycosylation occurs at Asn-31.

Belongs to the flavin monoamine oxidase family. FIG1 subfamily. It depends on FAD as a cofactor.

It is found in the secreted. The protein resides in the lysosome. Its subcellular location is the cytoplasmic vesicle. It localises to the secretory vesicle. The protein localises to the acrosome. The enzyme catalyses an L-alpha-amino acid + O2 + H2O = a 2-oxocarboxylate + H2O2 + NH4(+). The catalysed reaction is L-tryptophan + O2 + H2O = indole-3-pyruvate + H2O2 + NH4(+). It carries out the reaction L-phenylalanine + O2 + H2O = 3-phenylpyruvate + H2O2 + NH4(+). It catalyses the reaction L-tyrosine + O2 + H2O = 3-(4-hydroxyphenyl)pyruvate + H2O2 + NH4(+). The enzyme catalyses L-arginine + O2 + H2O = 5-guanidino-2-oxopentanoate + H2O2 + NH4(+). The protein operates within amino-acid degradation; L-tryptophan degradation via pyruvate pathway. Functionally, secreted L-amino-acid oxidase that acts as a key immunoregulator. Has preference for L-aromatic amino acids: converts phenylalanine (Phe), tyrosine (Tyr) and tryptophan (Trp) to phenylpyruvic acid (PP), hydroxyphenylpyruvic acid (HPP), and indole-3-pyruvic acid (I3P), respectively. Also has weak L-arginine oxidase activity. Acts as a negative regulator of anti-tumor immunity by mediating Trp degradation via an indole pyruvate pathway that activates the transcription factor AHR. IL4I1-mediated Trp catabolism generates I3P, giving rise to indole metabolites (indole-3-acetic acid (IAA) and indole-3-aldehyde (I3A)) and kynurenic acid, which act as ligands for AHR, a ligand-activated transcription factor that plays important roles in immunity and cancer. AHR activation by indoles following IL4I1-mediated Trp degradation enhances tumor progression by promoting cancer cell motility and suppressing adaptive immunity. Also has an immunoregulatory function in some immune cells, probably by mediating Trp degradation and promoting downstream AHR activation: inhibits T-cell activation and proliferation, promotes the differentiation of naive CD4(+) T-cells into FOXP3(+) regulatory T-cells (Treg) and regulates the development and function of B-cells. Also regulates M2 macrophage polarization by inhibiting T-cell activation. Also has antibacterial properties by inhibiting growth of Gram negative and Gram positive bacteria through the production of NH4(+) and H2O2. This is L-amino-acid oxidase from Mus spretus (Western Mediterranean mouse).